The sequence spans 77 residues: Defensin-like protein 159 (77 aa).

Positions 1-27 are cleaved as a signal peptide; it reads MAKLSCSYFLVLILVFSAFLMVERAEG. 4 cysteine pairs are disulfide-bonded: Cys30-Cys77, Cys40-Cys59, Cys45-Cys71, and Cys49-Cys73.

The protein belongs to the DEFL family.

It localises to the secreted. In Arabidopsis thaliana (Mouse-ear cress), this protein is Defensin-like protein 159 (LCR25).